A 218-amino-acid chain; its full sequence is Large ribosomal subunit protein uL3 (218 aa).

Residues 127-167 (GFSRGPMSHGSKNHREPGSTGAGTTPGRIYPGKRMAGRYGG) form a disordered region.

Belongs to the universal ribosomal protein uL3 family. In terms of assembly, part of the 50S ribosomal subunit. Forms a cluster with proteins L14 and L19.

One of the primary rRNA binding proteins, it binds directly near the 3'-end of the 23S rRNA, where it nucleates assembly of the 50S subunit. This is Large ribosomal subunit protein uL3 from Prochlorococcus marinus (strain MIT 9303).